The primary structure comprises 584 residues: MKRSGYCGDIRESSIGKEIAVCGWVHSRRDHGGVIFIDLRDREGILQIVFQPENKEIFEAAEKLRSEYVIAVKGWVRNRPFGTLNTNMSTGNVELVAVELKILNTSPGLPFEISDYIDTSEELRLKYRYLDLRRPNLQKNFVMRHKISKEIRNFLNEEGFLEIETPFLTKSTPEGARDFLVPSRLHHGNFFALPQSPQLFKQILMSAGFDKYYQIVRCFRDEDLRADRQPEFTQVDVEMSFVDEEDVMVVIERMLARVFKMTLNLDIKMPFERMPYSEAMLRFGSDKPDTRFEVEIKDFSRELKNSGFSVFSSVISKGGIVRGLCIPKGASFSRSEIAGLTKFVGEYGAKGLVWMKITDTGADSNIVKYFKEYEIRVFISKLNAKSGDLIVFLADEEKTVAQGLGALRLKVGRESGLIDKNKFNFLWVVDFPLMEWDKEEQRWQALHHPFTLPKDADSLTKENAGRAKAKAYDVVLNGIELGGGSIRIHKSGIQKKIFNILDISDESAEKKFGFLLKALTYGAPPHGGAALGFDRLCALISGEDSIREVIAFPKTQKAVDPLSNAPAAVSDNHLKELGLQQIEN.

Position 174 (glutamate 174) interacts with L-aspartate. Positions 198–201 are aspartate; sequence QLFK. Arginine 220 is an L-aspartate binding site. ATP-binding positions include 220–222 and glutamine 229; that span reads RDE. Histidine 447 is a binding site for L-aspartate. Residue glutamate 480 participates in ATP binding. Arginine 487 contacts L-aspartate. Residue 532-535 coordinates ATP; it reads GFDR.

It belongs to the class-II aminoacyl-tRNA synthetase family. Type 1 subfamily. In terms of assembly, homodimer.

It is found in the cytoplasm. The enzyme catalyses tRNA(Asx) + L-aspartate + ATP = L-aspartyl-tRNA(Asx) + AMP + diphosphate. Its function is as follows. Aspartyl-tRNA synthetase with relaxed tRNA specificity since it is able to aspartylate not only its cognate tRNA(Asp) but also tRNA(Asn). Reaction proceeds in two steps: L-aspartate is first activated by ATP to form Asp-AMP and then transferred to the acceptor end of tRNA(Asp/Asn). The sequence is that of Aspartate--tRNA(Asp/Asn) ligase from Endomicrobium trichonymphae.